Here is a 180-residue protein sequence, read N- to C-terminus: Cytochrome b6-f complex iron-sulfur subunit (180 aa).

Residues 21–43 form a helical membrane-spanning segment; that stretch reads LLTFGTITGTALGALYPVVKYFI. The Rieske domain maps to 66-162; that stretch reads VSEYLAKHLP…ATVTEDDKLV (97 aa). [2Fe-2S] cluster-binding residues include Cys-108, His-110, Cys-126, and His-129. The cysteines at positions 113 and 128 are disulfide-linked.

The protein belongs to the Rieske iron-sulfur protein family. The 4 large subunits of the cytochrome b6-f complex are cytochrome b6, subunit IV (17 kDa polypeptide, PetD), cytochrome f and the Rieske protein, while the 4 small subunits are PetG, PetL, PetM and PetN. The complex functions as a dimer. It depends on [2Fe-2S] cluster as a cofactor.

The protein resides in the cellular thylakoid membrane. The catalysed reaction is 2 oxidized [plastocyanin] + a plastoquinol + 2 H(+)(in) = 2 reduced [plastocyanin] + a plastoquinone + 4 H(+)(out). Component of the cytochrome b6-f complex, which mediates electron transfer between photosystem II (PSII) and photosystem I (PSI), cyclic electron flow around PSI, and state transitions. The polypeptide is Cytochrome b6-f complex iron-sulfur subunit (Thermosynechococcus vestitus (strain NIES-2133 / IAM M-273 / BP-1)).